The following is a 389-amino-acid chain: 23S rRNA (uracil(747)-C(5))-methyltransferase RlmC (389 aa).

[4Fe-4S] cluster-binding residues include Cys-12, Cys-20, Cys-23, and Cys-99. The S-adenosyl-L-methionine site is built by Gln-224, Phe-253, Glu-274, and Asn-321. Cys-348 (nucleophile) is an active-site residue.

It belongs to the class I-like SAM-binding methyltransferase superfamily. RNA M5U methyltransferase family. RlmC subfamily.

It carries out the reaction uridine(747) in 23S rRNA + S-adenosyl-L-methionine = 5-methyluridine(747) in 23S rRNA + S-adenosyl-L-homocysteine + H(+). Functionally, catalyzes the formation of 5-methyl-uridine at position 747 (m5U747) in 23S rRNA. This Shewanella putrefaciens (strain CN-32 / ATCC BAA-453) protein is 23S rRNA (uracil(747)-C(5))-methyltransferase RlmC.